The sequence spans 479 residues: G-rich sequence factor 1 (479 aa).

The N-terminal 116 residues, 1 to 116, are a transit peptide targeting the mitochondrion; it reads MAGTRWVLGA…AAAAGPARGY (116 aa). 2 RRM domains span residues 149 to 245 and 249 to 325; these read YLIR…PSPV and GVVR…PSRR. Phosphoserine is present on S243. A Phosphoserine modification is found at S334. Residues 400-479 enclose the RRM 3 domain; it reads HFVHMRGLPF…LFLNSCPKGK (80 aa).

As to quaternary structure, monomer. Found in a complex with DDX28, DHX30, FASTKD2 and FASTKD5. Interacts with the mitochondrial RNase P complex subunit TRMT10C/MRPP1. Interacts with the 2 components of the mitochondrial degradosome complex, PNPT1 and SUPV3L1, in an RNA-dependent manner.

It is found in the mitochondrion matrix. In terms of biological role, regulator of post-transcriptional mitochondrial gene expression, required for assembly of the mitochondrial ribosome and for recruitment of mRNA and lncRNA. Binds RNAs containing the 14 base G-rich element. Preferentially binds RNAs transcribed from three contiguous genes on the light strand of mtDNA, the ND6 mRNA, and the long non-coding RNAs for MT-CYB and MT-ND5, each of which contains multiple consensus binding sequences. Involved in the degradosome-mediated decay of non-coding mitochondrial transcripts (MT-ncRNA) and tRNA-like molecules. Acts by unwinding G-quadruplex RNA structures in MT-ncRNA, thus facilitating their degradation by the degradosome. G-quadruplexes (G4) are non-canonical 4 stranded structures formed by transcripts from the light strand of mtDNA. The chain is G-rich sequence factor 1 (Grsf1) from Mus musculus (Mouse).